A 257-amino-acid polypeptide reads, in one-letter code: Imidazole glycerol phosphate synthase subunit HisF (257 aa).

Active-site residues include D11 and D130.

Belongs to the HisA/HisF family. In terms of assembly, heterodimer of HisH and HisF.

Its subcellular location is the cytoplasm. The enzyme catalyses 5-[(5-phospho-1-deoxy-D-ribulos-1-ylimino)methylamino]-1-(5-phospho-beta-D-ribosyl)imidazole-4-carboxamide + L-glutamine = D-erythro-1-(imidazol-4-yl)glycerol 3-phosphate + 5-amino-1-(5-phospho-beta-D-ribosyl)imidazole-4-carboxamide + L-glutamate + H(+). Its pathway is amino-acid biosynthesis; L-histidine biosynthesis; L-histidine from 5-phospho-alpha-D-ribose 1-diphosphate: step 5/9. Its function is as follows. IGPS catalyzes the conversion of PRFAR and glutamine to IGP, AICAR and glutamate. The HisF subunit catalyzes the cyclization activity that produces IGP and AICAR from PRFAR using the ammonia provided by the HisH subunit. The protein is Imidazole glycerol phosphate synthase subunit HisF of Vibrio campbellii (strain ATCC BAA-1116).